The sequence spans 327 residues: DNA-directed RNA polymerase subunit alpha (327 aa).

The interval 1–233 (MVREKVKVST…NLFIPFLHVE (233 aa)) is alpha N-terminal domain (alpha-NTD). The alpha C-terminal domain (alpha-CTD) stretch occupies residues 267 to 327 (LAFQYIFIDQ…KKILDILEKK (61 aa)).

It belongs to the RNA polymerase alpha chain family. In terms of assembly, in plastids the minimal PEP RNA polymerase catalytic core is composed of four subunits: alpha, beta, beta', and beta''. When a (nuclear-encoded) sigma factor is associated with the core the holoenzyme is formed, which can initiate transcription.

The protein resides in the plastid. It is found in the chloroplast. It catalyses the reaction RNA(n) + a ribonucleoside 5'-triphosphate = RNA(n+1) + diphosphate. Functionally, DNA-dependent RNA polymerase catalyzes the transcription of DNA into RNA using the four ribonucleoside triphosphates as substrates. In Lepidium virginicum (Virginia pepperweed), this protein is DNA-directed RNA polymerase subunit alpha.